Reading from the N-terminus, the 124-residue chain is Large ribosomal subunit protein bL12 (124 aa).

It belongs to the bacterial ribosomal protein bL12 family. As to quaternary structure, homodimer. Part of the ribosomal stalk of the 50S ribosomal subunit. Forms a multimeric L10(L12)X complex, where L10 forms an elongated spine to which 2 to 4 L12 dimers bind in a sequential fashion. Binds GTP-bound translation factors.

In terms of biological role, forms part of the ribosomal stalk which helps the ribosome interact with GTP-bound translation factors. Is thus essential for accurate translation. This chain is Large ribosomal subunit protein bL12, found in Liberibacter africanus subsp. capensis.